Reading from the N-terminus, the 414-residue chain is MNITWNWYEQLESAHARAFTVAKATKAEVLDTIRWATEQAIANGTGEREYIKKLEPMLKELGWWGKAKDENGNEVQLGSPRRLRTILRTNKITAYHAARYAQQMENVDEQPYWRYVAVNDSRTRASHLALHGKIYRADDPIWQTMYPPNDWGCRCRVEALSEYAVQSRGLKISSSDGEMEMEEAVVGIDKDTGEEIRTTVSKIKTDQGEMKVGAGWNYNVGSAAFGTDVAVLRKLQQVKNRELRQQTIQAINNSEARHKAFADWVLANLGKRGASARYMSAGLVTTEIAEAVTEITQGGKNAELVLVMSEKRLAHANSDKHHEGGVGLTAEEYASISRIVANPSLVLWDTLEGHNNLIYINQERTIQVIVDVPNKHSIKPKEKVDAIINAYKVDMNNVKRQLSGGNYVLLKGKL.

The protein to phage Mu protein F.

Its function is as follows. Involved in virion morphogenesis. The protein is Mu-like prophage FluMu F protein of Haemophilus influenzae (strain ATCC 51907 / DSM 11121 / KW20 / Rd).